The following is a 316-amino-acid chain: ATP synthase gamma chain (316 aa).

It belongs to the ATPase gamma chain family. F-type ATPases have 2 components, CF(1) - the catalytic core - and CF(0) - the membrane proton channel. CF(1) has five subunits: alpha(3), beta(3), gamma(1), delta(1), epsilon(1). CF(0) has three main subunits: a, b and c.

Its subcellular location is the cellular thylakoid membrane. Produces ATP from ADP in the presence of a proton gradient across the membrane. The gamma chain is believed to be important in regulating ATPase activity and the flow of protons through the CF(0) complex. This chain is ATP synthase gamma chain, found in Parasynechococcus marenigrum (strain WH8102).